The primary structure comprises 461 residues: Cysteine--tRNA ligase (461 aa).

C28 lines the Zn(2+) pocket. Positions 30–40 (MTVYDYCHLGH) match the 'HIGH' region motif. Positions 212, 237, and 241 each coordinate Zn(2+). The short motif at 269–273 (KMSKS) is the 'KMSKS' region element. ATP is bound at residue K272.

This sequence belongs to the class-I aminoacyl-tRNA synthetase family. Monomer. It depends on Zn(2+) as a cofactor.

The protein localises to the cytoplasm. The enzyme catalyses tRNA(Cys) + L-cysteine + ATP = L-cysteinyl-tRNA(Cys) + AMP + diphosphate. The sequence is that of Cysteine--tRNA ligase from Aromatoleum aromaticum (strain DSM 19018 / LMG 30748 / EbN1) (Azoarcus sp. (strain EbN1)).